The chain runs to 291 residues: Bifunctional protein FolD (291 aa).

Residues 165 to 167, serine 190, and isoleucine 231 contribute to the NADP(+) site; that span reads GRS.

This sequence belongs to the tetrahydrofolate dehydrogenase/cyclohydrolase family. Homodimer.

It catalyses the reaction (6R)-5,10-methylene-5,6,7,8-tetrahydrofolate + NADP(+) = (6R)-5,10-methenyltetrahydrofolate + NADPH. The enzyme catalyses (6R)-5,10-methenyltetrahydrofolate + H2O = (6R)-10-formyltetrahydrofolate + H(+). The protein operates within one-carbon metabolism; tetrahydrofolate interconversion. Catalyzes the oxidation of 5,10-methylenetetrahydrofolate to 5,10-methenyltetrahydrofolate and then the hydrolysis of 5,10-methenyltetrahydrofolate to 10-formyltetrahydrofolate. The sequence is that of Bifunctional protein FolD from Azoarcus sp. (strain BH72).